The sequence spans 466 residues: Asparagine--tRNA ligase (466 aa).

This sequence belongs to the class-II aminoacyl-tRNA synthetase family. As to quaternary structure, homodimer.

It localises to the cytoplasm. It catalyses the reaction tRNA(Asn) + L-asparagine + ATP = L-asparaginyl-tRNA(Asn) + AMP + diphosphate + H(+). This chain is Asparagine--tRNA ligase, found in Escherichia coli O139:H28 (strain E24377A / ETEC).